The chain runs to 186 residues: Der GTPase-activating protein YihI (186 aa).

The disordered stretch occupies residues 1 to 65 (MARTKKTRRI…AGSRHSAVDT (65 aa)). 2 stretches are compositionally biased toward basic and acidic residues: residues 9–25 (RITD…RPEN) and 34–45 (TRYELDAKSREE).

It belongs to the YihI family. In terms of assembly, interacts with Der.

Its function is as follows. A GTPase-activating protein (GAP) that modifies Der/EngA GTPase function. May play a role in ribosome biogenesis. This Histophilus somni (strain 129Pt) (Haemophilus somnus) protein is Der GTPase-activating protein YihI.